A 441-amino-acid polypeptide reads, in one-letter code: tRNA modification GTPase MnmE (441 aa).

3 residues coordinate (6S)-5-formyl-5,6,7,8-tetrahydrofolate: Arg-22, Glu-80, and Lys-118. The TrmE-type G domain occupies 213-366; that stretch reads GIYIAIVGEP…LLNLIKQRVE (154 aa). GTP is bound by residues 223–228, 242–248, and 267–270; these read NSGKST, SEYAGTT, and DTAG. The Mg(2+) site is built by Ser-227 and Thr-248. Lys-441 is a binding site for (6S)-5-formyl-5,6,7,8-tetrahydrofolate.

Belongs to the TRAFAC class TrmE-Era-EngA-EngB-Septin-like GTPase superfamily. TrmE GTPase family. In terms of assembly, homodimer. Heterotetramer of two MnmE and two MnmG subunits. Requires K(+) as cofactor.

It is found in the cytoplasm. In terms of biological role, exhibits a very high intrinsic GTPase hydrolysis rate. Involved in the addition of a carboxymethylaminomethyl (cmnm) group at the wobble position (U34) of certain tRNAs, forming tRNA-cmnm(5)s(2)U34. This Ehrlichia canis (strain Jake) protein is tRNA modification GTPase MnmE.